The sequence spans 259 residues: E3 ubiquitin-protein ligase RNF170 (259 aa).

Residues 1–25 (MAKYQGEVQSLKLDDDSVIEGVSDQ) are Lumenal-facing. The chain crosses the membrane as a helical span at residues 26–46 (VLVAVVVSLALIATLVYALFS). The Cytoplasmic segment spans residues 47 to 202 (RNAHQNIHPE…GGLFWMFRIR (156 aa)). The segment at 88 to 131 (CPICLHQASLPVETNCGHLFCGTCIVAYWRYGSWLGAISCPICR) adopts an RING-type zinc-finger fold. A helical membrane pass occupies residues 203–223 (IILCLMGAFFYLISPLDFVPE). A topological domain (lumenal) is located at residue alanine 224. The helical transmembrane segment at 225-245 (LFGILGFLDDFFVIFLLLIYI) threads the bilayer. Over 246 to 259 (SIMYREVITQRLNR) the chain is Cytoplasmic.

Constitutively associated with the ERLIN1/ERLIN 2 complex. Interacts with activated ITPR1.

It localises to the endoplasmic reticulum membrane. It catalyses the reaction S-ubiquitinyl-[E2 ubiquitin-conjugating enzyme]-L-cysteine + [acceptor protein]-L-lysine = [E2 ubiquitin-conjugating enzyme]-L-cysteine + N(6)-ubiquitinyl-[acceptor protein]-L-lysine.. It functions in the pathway protein modification; protein ubiquitination. In terms of biological role, E3 ubiquitin-protein ligase. Plays an essential role in stimulus-induced inositol 1,4,5-trisphosphate receptor type 1 (ITPR1) ubiquitination and degradation via the endoplasmic reticulum-associated degradation (ERAD) pathway. Also involved in ITPR1 turnover in resting cells. Selectively inhibits the TLR3-triggered innate immune response by promoting the 'Lys-48'-linked polyubiquitination and degradation of TLR3. This chain is E3 ubiquitin-protein ligase RNF170 (RNF170), found in Bos taurus (Bovine).